Reading from the N-terminus, the 157-residue chain is Transcription elongation factor GreA (157 aa).

A coiled-coil region spans residues 46 to 73 (AEYHSARERQSFIEGRIAELEEIISAAE).

It belongs to the GreA/GreB family.

Its function is as follows. Necessary for efficient RNA polymerase transcription elongation past template-encoded arresting sites. The arresting sites in DNA have the property of trapping a certain fraction of elongating RNA polymerases that pass through, resulting in locked ternary complexes. Cleavage of the nascent transcript by cleavage factors such as GreA or GreB allows the resumption of elongation from the new 3'terminus. GreA releases sequences of 2 to 3 nucleotides. This chain is Transcription elongation factor GreA, found in Acidiphilium cryptum (strain JF-5).